The following is a 368-amino-acid chain: tRNA-specific 2-thiouridylase MnmA (368 aa).

Residues 23-30 (ALSGGVDS) and Leu-49 contribute to the ATP site. Cys-110 functions as the Nucleophile in the catalytic mechanism. Cys-110 and Cys-209 are oxidised to a cystine. Gly-135 provides a ligand contact to ATP. Positions 159 to 161 (KDQ) are interaction with tRNA. The Cysteine persulfide intermediate role is filled by Cys-209. Residues 314 to 315 (RY) are interaction with tRNA.

It belongs to the MnmA/TRMU family.

The protein resides in the cytoplasm. The enzyme catalyses S-sulfanyl-L-cysteinyl-[protein] + uridine(34) in tRNA + AH2 + ATP = 2-thiouridine(34) in tRNA + L-cysteinyl-[protein] + A + AMP + diphosphate + H(+). Functionally, catalyzes the 2-thiolation of uridine at the wobble position (U34) of tRNA, leading to the formation of s(2)U34. In Synechococcus sp. (strain JA-2-3B'a(2-13)) (Cyanobacteria bacterium Yellowstone B-Prime), this protein is tRNA-specific 2-thiouridylase MnmA.